A 196-amino-acid chain; its full sequence is tRNA(Phe) 7-((3-amino-3-carboxypropyl)-4-demethylwyosine(37)-N(4))-methyltransferase 1 (196 aa).

Belongs to the TYW3 family.

The catalysed reaction is 4-demethyl-7-[(3S)-3-amino-3-carboxypropyl]wyosine(37) in tRNA(Phe) + S-adenosyl-L-methionine = 7-[(3S)-3-amino-3-carboxypropyl]wyosine(37) in tRNA(Phe) + S-adenosyl-L-homocysteine + H(+). Functionally, S-adenosyl-L-methionine-dependent methyltransferase that acts as a component of the wyosine derivatives biosynthesis pathway. Probably methylates N-4 position of wybutosine-86 to produce wybutosine-72. The protein is tRNA(Phe) 7-((3-amino-3-carboxypropyl)-4-demethylwyosine(37)-N(4))-methyltransferase 1 of Pyrococcus horikoshii (strain ATCC 700860 / DSM 12428 / JCM 9974 / NBRC 100139 / OT-3).